We begin with the raw amino-acid sequence, 163 residues long: Putative pre-16S rRNA nuclease (163 aa).

This sequence belongs to the YqgF nuclease family.

Its subcellular location is the cytoplasm. Functionally, could be a nuclease involved in processing of the 5'-end of pre-16S rRNA. The protein is Putative pre-16S rRNA nuclease of Zymomonas mobilis subsp. mobilis (strain ATCC 31821 / ZM4 / CP4).